The chain runs to 133 residues: Cytidine deaminase (133 aa).

The region spanning 3 to 131 is the CMP/dCMP-type deaminase domain; sequence VDLDWVHHKL…EILKGGFRSY (129 aa). 43–45 is a substrate binding site; sequence NIE. Residue Cys-54 participates in Zn(2+) binding. Catalysis depends on Glu-56, which acts as the Proton donor. Cys-89 and Cys-92 together coordinate Zn(2+).

Belongs to the cytidine and deoxycytidylate deaminase family. Homodimer. Requires Zn(2+) as cofactor.

The enzyme catalyses cytidine + H2O + H(+) = uridine + NH4(+). It carries out the reaction 2'-deoxycytidine + H2O + H(+) = 2'-deoxyuridine + NH4(+). In terms of biological role, this enzyme scavenges exogenous and endogenous cytidine and 2'-deoxycytidine for UMP synthesis. This chain is Cytidine deaminase (cdd), found in Mycoplasma pneumoniae (strain ATCC 29342 / M129 / Subtype 1) (Mycoplasmoides pneumoniae).